Consider the following 406-residue polypeptide: [Pyruvate dehydrogenase (acetyl-transferring)] kinase isozyme 3, mitochondrial (406 aa).

One can recognise a Histidine kinase domain in the interval 131 to 362 (IEYKEKFGFD…DAVIYLKALS (232 aa)). 247–254 (ELFKNSMR) contacts ATP. Lys278 carries the post-translational modification N6-succinyllysine. Residues Asp287, 306-307 (ST), and 323-328 (GFGYGL) each bind ATP. The segment at 383–406 (TPEADDWSNPSSEPRDASKYKAKQ) is disordered. Residues 395 to 406 (EPRDASKYKAKQ) are compositionally biased toward basic and acidic residues.

It belongs to the PDK/BCKDK protein kinase family. As to quaternary structure, homodimer. Interacts with the pyruvate dehydrogenase complex subunit DLAT, and is part of the multimeric pyruvate dehydrogenase complex that contains multiple copies of pyruvate dehydrogenase (E1), dihydrolipoamide acetyltransferase (DLAT, E2) and lipoamide dehydrogenase (DLD, E3). Expressed in heart, skeletal muscle, spinal cord, as well as fetal and adult brain.

It is found in the mitochondrion matrix. The catalysed reaction is L-seryl-[pyruvate dehydrogenase E1 alpha subunit] + ATP = O-phospho-L-seryl-[pyruvate dehydrogenase E1 alpha subunit] + ADP + H(+). Its activity is regulated as follows. Activated by interaction with DLAT. Inhibited by AZD7545, dichloroacetate and radicicol. Its function is as follows. Inhibits pyruvate dehydrogenase activity by phosphorylation of the E1 subunit PDHA1, and thereby regulates glucose metabolism and aerobic respiration. Can also phosphorylate PDHA2. Decreases glucose utilization and increases fat metabolism in response to prolonged fasting, and as adaptation to a high-fat diet. Plays a role in glucose homeostasis and in maintaining normal blood glucose levels in function of nutrient levels and under starvation. Plays a role in the generation of reactive oxygen species. The protein is [Pyruvate dehydrogenase (acetyl-transferring)] kinase isozyme 3, mitochondrial (PDK3) of Homo sapiens (Human).